The primary structure comprises 902 residues: Magnesium-transporting ATPase, P-type 1 (902 aa).

Topologically, residues 1–98 (MLKIITRQLF…KPSPWWVHLW (98 aa)) are cytoplasmic. Residues 99–119 (VCYRNPFNILLTILGGISYAT) traverse the membrane as a helical segment. Glu120 is a topological domain (extracellular). The chain crosses the membrane as a helical span at residues 121–141 (DLFAAGVIALMVGISTLLNFV). Residues 142 to 291 (QEARSTKAAD…QNAFQKGISR (150 aa)) lie on the Cytoplasmic side of the membrane. A helical membrane pass occupies residues 292 to 312 (VSMLLIRFMLVMAPVVLIING). The Extracellular segment spans residues 313–321 (YTKGDWWEA). A helical transmembrane segment spans residues 322-339 (ALFALSVAVGLTPEMLPM). Glu335 is a binding site for Mg(2+). Residues 340–699 (IVTSTLARGA…IEGRRTFSNM (360 aa)) are Cytoplasmic-facing. Catalysis depends on Asp377, which acts as the 4-aspartylphosphate intermediate. Mg(2+)-binding residues include Asp645, Asp649, and Asn713. The helical transmembrane segment at 700–719 (LKYIKMTASSNFGNVFSVLV) threads the bilayer. Residues 720-728 (ASAFLPFLP) lie on the Extracellular side of the membrane. A helical transmembrane segment spans residues 729–748 (MLPLHLLIQNLLYDVSQVAI). Residues Asn738 and Asp742 each coordinate Mg(2+). The Cytoplasmic portion of the chain corresponds to 749–770 (PFDNVDEEQIQKPQRWNPADLG). Residues 771-794 (RFMVFFGPISSIFDILTFCLMWWV) traverse the membrane as a helical segment. Residues 795-803 (FHANTPETQ) are Extracellular-facing. The chain crosses the membrane as a helical span at residues 804–822 (TLFQSGWFVVGLLSQTLIV). Residues 823–835 (HMIRTRRLPFIQS) lie on the Cytoplasmic side of the membrane. Residues 836-855 (RAAWPLMAMTLLVMVVGVSL) form a helical membrane-spanning segment. Topologically, residues 856-870 (PFSPLASYLQLQALP) are extracellular. A helical transmembrane segment spans residues 871 to 890 (LSYFPWLIAILVGYMTLTQL). Topologically, residues 891 to 902 (VKGFYSRRYGWQ) are cytoplasmic.

Belongs to the cation transport ATPase (P-type) (TC 3.A.3) family. Type IIIB subfamily.

The protein resides in the cell inner membrane. The catalysed reaction is Mg(2+)(out) + ATP + H2O = Mg(2+)(in) + ADP + phosphate + H(+). In terms of biological role, mediates magnesium influx to the cytosol. In Salmonella typhimurium (strain 14028s / SGSC 2262), this protein is Magnesium-transporting ATPase, P-type 1 (mgtA).